A 732-amino-acid polypeptide reads, in one-letter code: Small conductance calcium-activated potassium channel protein 3 (732 aa).

Basic and acidic residues predominate over residues 1-11 (MDTSGHFHDSG). 2 disordered regions span residues 1-82 (MDTS…QQAP) and 119-161 (AILH…QASP). Residues 35–61 (QPPPPPAPPAVPQQPPGPLLQPQPPQP) are compositionally biased toward pro residues. Positions 62-82 (QQQQSQQQQQQQSQQQQQQAP) are enriched in low complexity. The segment covering 119 to 133 (AILHPSSRQGSQLNL) has biased composition (polar residues). The segment covering 139-148 (GHSPSSTATS) has biased composition (low complexity). Ser-168 carries the phosphoserine modification. The span at 241 to 257 (THNHQHAGTTAGSTTFP) shows a compositional bias: polar residues. Positions 241-260 (THNHQHAGTTAGSTTFPKAN) are disordered. Residues 289 to 309 (LIFGMFGIVVMVIETELSWGL) form a helical membrane-spanning segment. A helical membrane pass occupies residues 316 to 336 (FSLALKCLISLSTVILLGLII). Residues 367–387 (ISLEMLVCAIHPIPGEYKFFW) traverse the membrane as a helical segment. A helical membrane pass occupies residues 406–426 (IILSIPMFLRLYLIARVMLLH). A helical transmembrane segment spans residues 455–475 (LMTICPGTVLLVFSISLWIIA). Residues 495-515 (FLGAMWLISITFLSIGYGDMV) constitute an intramembrane region (pore-forming). A helical transmembrane segment spans residues 524–544 (VCLLTGIMGAGCTALVVAVVA). Residues 562–638 (DTQLTKRIKN…LVDLSKMQNV (77 aa)) form a calmodulin-binding region. Positions 643–670 (ITELNDRSEDLEKQIGSLESKLEHLTAS) form a coiled coil. The segment at 704-732 (GTSHAPPSDSPIGISSTSFPTPYTSSSSC) is disordered. Residues 718–732 (SSTSFPTPYTSSSSC) show a composition bias toward low complexity.

This sequence belongs to the potassium channel KCNN family. KCa2.3/KCNN3 subfamily. In terms of assembly, homodimer. Heteromultimer with KCNN2 or KCNN1; this modulates plasma membrane expression and consequently the small conductance calcium-activated potassium channel activity. The complex is composed of 4 channel subunits each of which binds to a calmodulin subunit which regulates the channel activity through calcium-binding. Interacts with CALM1. As to expression, expressed at low levels in atrial and ventricular myocytes (at protein level).

Its subcellular location is the cell membrane. It is found in the cytoplasm. The protein resides in the myofibril. It localises to the sarcomere. The protein localises to the z line. It catalyses the reaction K(+)(in) = K(+)(out). With respect to regulation, inhibited by bee venom neurotoxin apamin. Small conductance calcium-activated potassium channel that mediates the voltage-independent transmembrane transfer of potassium across the cell membrane through a constitutive interaction with calmodulin which binds the intracellular calcium allowing its opening. The current is characterized by a voltage-independent activation, an intracellular calcium concentration increase-dependent activation and a single-channel conductance of 10 picosiemens. Also presents an inwardly rectifying current, thus reducing its already small outward conductance of potassium ions, which is particularly the case when the membrane potential displays positive values, above + 20 mV. Activation is followed by membrane hyperpolarization. Thought to regulate neuronal excitability by contributing to the slow component of synaptic afterhyperpolarization. The sequence is that of Small conductance calcium-activated potassium channel protein 3 from Mus musculus (Mouse).